Consider the following 465-residue polypeptide: GTPase Der (465 aa).

2 consecutive EngA-type G domains span residues Phe3 to Tyr166 and Ile184 to Ser358. GTP is bound by residues Gly9–Ser16, Asp56–Ile60, Asn118–Asp121, Gly190–Ser197, Asp237–Val241, and Asn302–Asp305. Positions Lys359–Glu443 constitute a KH-like domain. The disordered stretch occupies residues Phe446–Lys465.

This sequence belongs to the TRAFAC class TrmE-Era-EngA-EngB-Septin-like GTPase superfamily. EngA (Der) GTPase family. In terms of assembly, associates with the 50S ribosomal subunit.

In terms of biological role, GTPase that plays an essential role in the late steps of ribosome biogenesis. The protein is GTPase Der of Francisella tularensis subsp. tularensis (strain FSC 198).